Consider the following 882-residue polypeptide: Kelch repeat-containing protein 2 (882 aa).

Residues 41-60 (TPTLPPNQHRGISGASTALP) form a disordered region. 6 Kelch repeats span residues 99-143 (RIFV…PPRV), 153-207 (AYVV…IIAS), 213-267 (KLYL…AYDN), 268-317 (KLWV…VYKH), 319-369 (MCVL…LMKN), and 371-417 (KLLI…LCPG). The residue at position 455 (Thr455) is a Phosphothreonine. A compositionally biased stretch (basic and acidic residues) spans 480–496 (LDDKAFERKSDREEKKP). The interval 480-516 (LDDKAFERKSDREEKKPQSSKVDSSINKESPGTGIKV) is disordered. Polar residues predominate over residues 498–509 (SSKVDSSINKES). Ser509 carries the phosphoserine modification. Coiled-coil stretches lie at residues 550 to 685 (KNLF…QKIT) and 728 to 881 (NKIE…LEQK).

Interacts with KEL1.

In Saccharomyces cerevisiae (strain ATCC 204508 / S288c) (Baker's yeast), this protein is Kelch repeat-containing protein 2 (KEL2).